The sequence spans 80 residues: Metallothionein-like protein 2B (80 aa).

It belongs to the metallothionein superfamily. Type 15 family. Highly expressed in stems. Expressed in leaves and rachis.

Its function is as follows. Metallothioneins have a high content of cysteine residues that bind various heavy metals. The sequence is that of Metallothionein-like protein 2B (MT2B) from Oryza sativa subsp. japonica (Rice).